The primary structure comprises 196 residues: Putative acetyltransferase YJL218W (196 aa).

Asparagine 84 is a binding site for acetyl-CoA. Histidine 114 acts as the Proton donor/acceptor in catalysis. Residues glycine 141, alanine 159, 164–165, lysine 179, and arginine 182 each bind acetyl-CoA; that span reads IR.

It belongs to the transferase hexapeptide repeat family. Homodimer.

This Saccharomyces cerevisiae (strain ATCC 204508 / S288c) (Baker's yeast) protein is Putative acetyltransferase YJL218W.